The following is an 863-amino-acid chain: Valine--tRNA ligase (863 aa).

Positions 43-53 (PYPTGSFHIGH) match the 'HIGH' region motif. The 'KMSKS' region motif lies at 517-521 (KMSKS). Lys520 contributes to the ATP binding site.

This sequence belongs to the class-I aminoacyl-tRNA synthetase family. ValS type 2 subfamily.

It is found in the cytoplasm. It carries out the reaction tRNA(Val) + L-valine + ATP = L-valyl-tRNA(Val) + AMP + diphosphate. Its function is as follows. Catalyzes the attachment of valine to tRNA(Val). As ValRS can inadvertently accommodate and process structurally similar amino acids such as threonine, to avoid such errors, it has a 'posttransfer' editing activity that hydrolyzes mischarged Thr-tRNA(Val) in a tRNA-dependent manner. This is Valine--tRNA ligase from Archaeoglobus fulgidus (strain ATCC 49558 / DSM 4304 / JCM 9628 / NBRC 100126 / VC-16).